The following is a 247-amino-acid chain: Carboxy-S-adenosyl-L-methionine synthase (247 aa).

Residues tyrosine 39, 64 to 66, 89 to 90, 117 to 118, asparagine 132, and arginine 199 each bind S-adenosyl-L-methionine; these read GCS, DN, and DI.

This sequence belongs to the class I-like SAM-binding methyltransferase superfamily. Cx-SAM synthase family. Homodimer.

The enzyme catalyses prephenate + S-adenosyl-L-methionine = carboxy-S-adenosyl-L-methionine + 3-phenylpyruvate + H2O. Catalyzes the conversion of S-adenosyl-L-methionine (SAM) to carboxy-S-adenosyl-L-methionine (Cx-SAM). This Salmonella agona (strain SL483) protein is Carboxy-S-adenosyl-L-methionine synthase.